Here is a 198-residue protein sequence, read N- to C-terminus: MSLARTLARRAAVQAVYQWQLARDSLPDIERQFVEELQLAKSLYRRHAEGFELSPPEREQLEELLEKFGRSQGTDEVEEEDVTLEQRASQCQVPDVQVGYFKELLHGVANNLALLDAALAKYLDRPIDEVDPVERAILRIGCYEFMRRPETPYRVILNEAINLAKEFGAAQSYRYVNGILDRVAHECRAVEMAARRRG.

This sequence belongs to the NusB family.

Its function is as follows. Involved in transcription antitermination. Required for transcription of ribosomal RNA (rRNA) genes. Binds specifically to the boxA antiterminator sequence of the ribosomal RNA (rrn) operons. The polypeptide is Transcription antitermination protein NusB (Methylococcus capsulatus (strain ATCC 33009 / NCIMB 11132 / Bath)).